We begin with the raw amino-acid sequence, 94 residues long: Pyrimidine/purine nucleoside phosphorylase (94 aa).

It belongs to the nucleoside phosphorylase PpnP family.

The catalysed reaction is a purine D-ribonucleoside + phosphate = a purine nucleobase + alpha-D-ribose 1-phosphate. It carries out the reaction adenosine + phosphate = alpha-D-ribose 1-phosphate + adenine. The enzyme catalyses cytidine + phosphate = cytosine + alpha-D-ribose 1-phosphate. It catalyses the reaction guanosine + phosphate = alpha-D-ribose 1-phosphate + guanine. The catalysed reaction is inosine + phosphate = alpha-D-ribose 1-phosphate + hypoxanthine. It carries out the reaction thymidine + phosphate = 2-deoxy-alpha-D-ribose 1-phosphate + thymine. The enzyme catalyses uridine + phosphate = alpha-D-ribose 1-phosphate + uracil. It catalyses the reaction xanthosine + phosphate = alpha-D-ribose 1-phosphate + xanthine. Catalyzes the phosphorolysis of diverse nucleosides, yielding D-ribose 1-phosphate and the respective free bases. Can use uridine, adenosine, guanosine, cytidine, thymidine, inosine and xanthosine as substrates. Also catalyzes the reverse reactions. The sequence is that of Pyrimidine/purine nucleoside phosphorylase from Vibrio parahaemolyticus serotype O3:K6 (strain RIMD 2210633).